Reading from the N-terminus, the 333-residue chain is 4-hydroxy-3-methylbut-2-enyl diphosphate reductase (333 aa).

Cys20 contacts [4Fe-4S] cluster. (2E)-4-hydroxy-3-methylbut-2-enyl diphosphate contacts are provided by His49 and His82. Dimethylallyl diphosphate contacts are provided by His49 and His82. His49 and His82 together coordinate isopentenyl diphosphate. Cys104 serves as a coordination point for [4Fe-4S] cluster. His132 contacts (2E)-4-hydroxy-3-methylbut-2-enyl diphosphate. His132 is a dimethylallyl diphosphate binding site. His132 is an isopentenyl diphosphate binding site. The active-site Proton donor is Glu134. Thr172 provides a ligand contact to (2E)-4-hydroxy-3-methylbut-2-enyl diphosphate. Cys202 is a [4Fe-4S] cluster binding site. 4 residues coordinate (2E)-4-hydroxy-3-methylbut-2-enyl diphosphate: Ser230, Ser231, Asn232, and Ser274. Positions 230, 231, 232, and 274 each coordinate dimethylallyl diphosphate. 4 residues coordinate isopentenyl diphosphate: Ser230, Ser231, Asn232, and Ser274.

Belongs to the IspH family. [4Fe-4S] cluster serves as cofactor.

It catalyses the reaction isopentenyl diphosphate + 2 oxidized [2Fe-2S]-[ferredoxin] + H2O = (2E)-4-hydroxy-3-methylbut-2-enyl diphosphate + 2 reduced [2Fe-2S]-[ferredoxin] + 2 H(+). The enzyme catalyses dimethylallyl diphosphate + 2 oxidized [2Fe-2S]-[ferredoxin] + H2O = (2E)-4-hydroxy-3-methylbut-2-enyl diphosphate + 2 reduced [2Fe-2S]-[ferredoxin] + 2 H(+). The protein operates within isoprenoid biosynthesis; dimethylallyl diphosphate biosynthesis; dimethylallyl diphosphate from (2E)-4-hydroxy-3-methylbutenyl diphosphate: step 1/1. It functions in the pathway isoprenoid biosynthesis; isopentenyl diphosphate biosynthesis via DXP pathway; isopentenyl diphosphate from 1-deoxy-D-xylulose 5-phosphate: step 6/6. Functionally, catalyzes the conversion of 1-hydroxy-2-methyl-2-(E)-butenyl 4-diphosphate (HMBPP) into a mixture of isopentenyl diphosphate (IPP) and dimethylallyl diphosphate (DMAPP). Acts in the terminal step of the DOXP/MEP pathway for isoprenoid precursor biosynthesis. This chain is 4-hydroxy-3-methylbut-2-enyl diphosphate reductase, found in Polaromonas sp. (strain JS666 / ATCC BAA-500).